Here is a 389-residue protein sequence, read N- to C-terminus: MSEYLFTSESVSEGHPDKVADQVSDAILDAILAQDPKARVAAETLVNTGLCVLAGEITTTAQVDYIKVARETIKRIGYNSSELGFDANGCAVGVYYDQQSPDIAQGVNEGEGIDLNQGAGDQGLMFGYACDETPTLMPFAIYYSHRLMQRQSELRKDGRLPWLRPDAKAQLTVVYDSETGKVKRIDTVVLSTQHDPSIAYEELKNAVIEHIIKPVLPSELLTDETKYLINPTGRFVIGGPQGDCGLTGRKIIVDTYGGAAPHGGGAFSGKDPSKVDRSAAYACRYVAKNIVAAGLATQCQIQVSYAIGVAEPTSISIDTFGTGKISEEKLIALVREHFDLRPKGIVQMLDLLRPIYSKSAAYGHFGREEPEFTWERTDKAAALRAAAGL.

H15 is an ATP binding site. D17 contributes to the Mg(2+) binding site. Position 43 (E43) interacts with K(+). L-methionine is bound by residues E56 and Q99. The segment at 99–109 (QSPDIAQGVNE) is flexible loop. ATP contacts are provided by residues 166-168 (DAK), 234-235 (RF), D243, 249-250 (RK), A266, and K270. L-methionine is bound at residue D243. K274 contacts L-methionine.

This sequence belongs to the AdoMet synthase family. Homotetramer; dimer of dimers. It depends on Mg(2+) as a cofactor. The cofactor is K(+).

It localises to the cytoplasm. It catalyses the reaction L-methionine + ATP + H2O = S-adenosyl-L-methionine + phosphate + diphosphate. The protein operates within amino-acid biosynthesis; S-adenosyl-L-methionine biosynthesis; S-adenosyl-L-methionine from L-methionine: step 1/1. Functionally, catalyzes the formation of S-adenosylmethionine (AdoMet) from methionine and ATP. The overall synthetic reaction is composed of two sequential steps, AdoMet formation and the subsequent tripolyphosphate hydrolysis which occurs prior to release of AdoMet from the enzyme. The polypeptide is S-adenosylmethionine synthase (Neisseria meningitidis serogroup B (strain ATCC BAA-335 / MC58)).